A 385-amino-acid polypeptide reads, in one-letter code: POU domain, class 3, transcription factor 2-B (385 aa).

Disordered regions lie at residues 106–136, 149–209, and 351–385; these read LVHPAHGNHHGPGAWRSTGSTHLSSMASSNG, NGMI…TPTS, and EKRMTPPGGTIPGAEDVYGASRDTPPHLGVQTSVQ. Residues 122–136 show a composition bias toward polar residues; sequence STGSTHLSSMASSNG. Residues 165 to 178 show a composition bias toward basic and acidic residues; that stretch reads LRDSHDDHHGDHGH. The span at 179–196 shows a compositional bias: low complexity; sequence QQPSQTQQQQQQHSQLQG. One can recognise a POU-specific domain in the interval 204–278; the sequence is EDTPTSDDLE…LLNKWLEEAD (75 aa). A DNA-binding region (homeobox) is located at residues 296-355; the sequence is KRKKRTSIEVSVKGALESHFLKCPKPAAQEITSLADSLQLEKEVVRVWFCNRRQKEKRMT.

This sequence belongs to the POU transcription factor family. Class-3 subfamily. As to expression, expressed in the developing brain and spinal cord. Also found in a restricted region of the auditory vesicle during development. In the adult, expression is restricted to the brain.

The protein localises to the nucleus. In terms of biological role, transcription factor that may be implicated in patterning of the central nervous system during early development. This Xenopus laevis (African clawed frog) protein is POU domain, class 3, transcription factor 2-B (pou3f2-b).